The chain runs to 60 residues: Bowman-Birk type proteinase inhibitor C1 (60 aa).

Cystine bridges form between Cys5–Cys21, Cys11–Cys19, Cys28–Cys35, and Cys32–Cys49.

This sequence belongs to the Bowman-Birk serine protease inhibitor family. In terms of tissue distribution, expressed in bulb (at protein level).

In terms of biological role, serine protease inhibitor. Strongly inhibits trypsin (Ki = 0.22 nM) and very weakly inhibits chymotrypsin (Ki = 1200 nM). Does not inhibit bacterial subtilisin. In Hyacinthus orientalis (Common hyacinth), this protein is Bowman-Birk type proteinase inhibitor C1.